Consider the following 64-residue polypeptide: UPF0337 protein SAB0772 (64 aa).

The interval 1–40 (MADESKFEQAKGNVKETIGNVTDNKNLENEGKEDKASGKA) is disordered. Positions 25–40 (KNLENEGKEDKASGKA) are enriched in basic and acidic residues.

Belongs to the UPF0337 (CsbD) family.

The chain is UPF0337 protein SAB0772 from Staphylococcus aureus (strain bovine RF122 / ET3-1).